A 291-amino-acid chain; its full sequence is m-AAA protease-interacting protein 1, mitochondrial (291 aa).

The N-terminal 96 residues, 1 to 96 (MALAVRLLPR…TFPSCPRRTY (96 aa)), are a transit peptide targeting the mitochondrion.

Interacts with AFG3L2. Interacts with SPG7. Interacts with SMDT1/EMRE (via the N-terminal transit peptide); interaction is direct and takes place before maturation of SMDT1/EMRE.

The protein localises to the mitochondrion matrix. Its function is as follows. Promotes sorting of SMDT1/EMRE in mitochondria by ensuring its maturation. Interacts with the transit peptide region of SMDT1/EMRE precursor protein in the mitochondrial matrix, leading to protect it against protein degradation by YME1L1, thereby ensuring SMDT1/EMRE maturation by the mitochondrial processing peptidase (PMPCA and PMPCB). In Bos taurus (Bovine), this protein is m-AAA protease-interacting protein 1, mitochondrial.